A 175-amino-acid polypeptide reads, in one-letter code: Co-chaperone protein HscB homolog (175 aa).

One can recognise a J domain in the interval 2 to 74 (NYFQLFNIEV…LQRAEYILVQ (73 aa)).

The protein belongs to the HscB family. As to quaternary structure, interacts with HscA and stimulates its ATPase activity.

Its function is as follows. Co-chaperone involved in the maturation of iron-sulfur cluster-containing proteins. Seems to help targeting proteins to be folded toward HscA. The protein is Co-chaperone protein HscB homolog of Colwellia psychrerythraea (strain 34H / ATCC BAA-681) (Vibrio psychroerythus).